We begin with the raw amino-acid sequence, 200 residues long: Dephospho-CoA kinase (200 aa).

Residues 3–200 enclose the DPCK domain; that stretch reads RIGLTGGIGS…LIAEILTRIK (198 aa). Position 11–16 (11–16) interacts with ATP; the sequence is GSGKST.

It belongs to the CoaE family.

The protein localises to the cytoplasm. It catalyses the reaction 3'-dephospho-CoA + ATP = ADP + CoA + H(+). The protein operates within cofactor biosynthesis; coenzyme A biosynthesis; CoA from (R)-pantothenate: step 5/5. In terms of biological role, catalyzes the phosphorylation of the 3'-hydroxyl group of dephosphocoenzyme A to form coenzyme A. The protein is Dephospho-CoA kinase of Corynebacterium efficiens (strain DSM 44549 / YS-314 / AJ 12310 / JCM 11189 / NBRC 100395).